Reading from the N-terminus, the 170-residue chain is MRTLLRWCLFLSLCVSCACAFMFSSMREKTKESPGKVPCGGHFRIRQNLPENAQGWLGNKWLWLFVAIMIYVMLKFRGDGENKEQHPPGLRGCQLRSPPKKAQNISPSKDFTFNTLTQLEMELVKFVSKVRNLKVSMATNSNSRQQVPESPTNLYNNVTIYEIWGEEDSE.

Residues 1-20 (MRTLLRWCLFLSLCVSCACA) form the signal peptide. Residues 56–76 (WLGNKWLWLFVAIMIYVMLKF) form a helical membrane-spanning segment. Residues 83–107 (KEQHPPGLRGCQLRSPPKKAQNISP) form a disordered region.

Interacts with DPY19L2. Interacts with CYLC1; the interaction may be relevant for proper acrosome attachment to the nuclear envelope. Predominately expressed in testis.

The protein localises to the nucleus inner membrane. In terms of biological role, required for sperm acrosome biogenesis. The sequence is that of Protein FAM209 from Mus musculus (Mouse).